We begin with the raw amino-acid sequence, 392 residues long: Stilbene synthase 3 (392 aa).

55–58 provides a ligand contact to substrate; that stretch reads KFNR. Cys-164 is a catalytic residue. Substrate is bound by residues Leu-267 and 305–307; that span reads GGP.

The protein belongs to the thiolase-like superfamily. Chalcone/stilbene synthases family. Homodimer.

The protein resides in the cytoplasm. It catalyses the reaction 4-coumaroyl-CoA + 3 malonyl-CoA + 3 H(+) = trans-resveratrol + 4 CO2 + 4 CoA. The protein operates within phytoalexin biosynthesis; 3,4',5-trihydroxystilbene biosynthesis; 3,4',5-trihydroxystilbene from trans-4-coumarate: step 2/2. Mediates resistance to pathogens which are sensitive to stilbenes. The sequence is that of Stilbene synthase 3 from Vitis vinifera (Grape).